The chain runs to 1760 residues: Chitin synthase A (1760 aa).

N-linked (GlcNAc...) asparagine glycosylation is present at Asn-157. Transmembrane regions (helical) follow at residues 729–749 (IWTG…LRFV) and 765–785 (LVLV…IIAF). Residues Asn-876 and Asn-996 are each glycosylated (N-linked (GlcNAc...) asparagine). The chain crosses the membrane as a helical span at residues 1027–1047 (ILLAFTCLICAVILVKFLAAL). The N-linked (GlcNAc...) asparagine glycan is linked to Asn-1392. The next 3 membrane-spanning stretches (helical) occupy residues 1417 to 1437 (FVVL…VYLG), 1449 to 1469 (IPII…IIFI), and 1477 to 1497 (IGWM…LPMY). 3 N-linked (GlcNAc...) asparagine glycosylation sites follow: Asn-1557, Asn-1645, and Asn-1650. The segment at 1670–1691 (DNLLGVPRPNSRSPVGGYTSRP) is disordered. In terms of domain architecture, DEK-C spans 1702–1758 (GPDEMAITDAIRSCLAEVDLDTVTKKQVRALVEQRLQATLTGDKRAFLDRQIDQELA).

This sequence belongs to the chitin synthase family. Class V subfamily.

The protein localises to the cell membrane. The catalysed reaction is [(1-&gt;4)-N-acetyl-beta-D-glucosaminyl](n) + UDP-N-acetyl-alpha-D-glucosamine = [(1-&gt;4)-N-acetyl-beta-D-glucosaminyl](n+1) + UDP + H(+). Its function is as follows. Polymerizes chitin, a structural polymer of the cell wall and septum, by transferring the sugar moiety of UDP-GlcNAc to the non-reducing end of the growing chitin polymer. Plays an important role in cell-wall formation during both hyphal growth and conidiation. This is Chitin synthase A from Aspergillus oryzae (strain ATCC 42149 / RIB 40) (Yellow koji mold).